The following is a 210-amino-acid chain: THAP domain-containing protein 1 (210 aa).

Residues Cys-5 to His-57 form a THAP-type zinc finger. The HCFC1-binding motif (HBM) motif lies at Asp-131–Tyr-134. Residues Glu-137–Lys-187 are a coiled coil.

It belongs to the THAP1 family. Interacts with PAWR. Component of a THAP1/THAP3-HCFC1-OGT complex that contains, either THAP1 or THAP3, HCFC1 and OGT. Interacts with OGT. Interacts (via the HBM) with HCFC1 (via the Kelch-repeat domain); the interaction recruits HCFC1 to the RRM1 promoter. In terms of tissue distribution, highest levels in heart, liver and kidney. Lower levels in brain and lung.

The protein localises to the nucleus. It localises to the nucleoplasm. Its subcellular location is the PML body. Its function is as follows. DNA-binding transcription regulator that regulates endothelial cell proliferation and G1/S cell-cycle progression. Specifically binds the 5'-[AT]NTNN[GT]GGCA[AGT]-3' core DNA sequence and acts by modulating expression of pRB-E2F cell-cycle target genes, including RRM1. Component of a THAP1/THAP3-HCFC1-OGT complex that is required for the regulation of the transcriptional activity of RRM1. May also have pro-apoptotic activity by potentiating both serum-withdrawal and TNF-induced apoptosis. The polypeptide is THAP domain-containing protein 1 (Thap1) (Mus musculus (Mouse)).